The chain runs to 142 residues: Hemoglobin subunit alpha-A (142 aa).

Residues 2-142 (VLSAADKTNV…VGTVLTAKYR (141 aa)) enclose the Globin domain. An O2-binding site is contributed by His59. His88 contacts heme b.

This sequence belongs to the globin family. Heterotetramer of two alpha chains and two beta chains. As to expression, red blood cells.

Functionally, involved in oxygen transport from the lung to the various peripheral tissues. The protein is Hemoglobin subunit alpha-A (HBAA) of Anser anser anser (Western greylag goose).